A 158-amino-acid polypeptide reads, in one-letter code: Endoribonuclease YbeY (158 aa).

Zn(2+) is bound by residues H122, H126, and H132.

Belongs to the endoribonuclease YbeY family. Zn(2+) serves as cofactor.

The protein localises to the cytoplasm. Functionally, single strand-specific metallo-endoribonuclease involved in late-stage 70S ribosome quality control and in maturation of the 3' terminus of the 16S rRNA. The chain is Endoribonuclease YbeY from Bacillus licheniformis (strain ATCC 14580 / DSM 13 / JCM 2505 / CCUG 7422 / NBRC 12200 / NCIMB 9375 / NCTC 10341 / NRRL NRS-1264 / Gibson 46).